Reading from the N-terminus, the 208-residue chain is Thymidylate kinase (208 aa).

10 to 17 (GPEGSGKT) is an ATP binding site.

This sequence belongs to the thymidylate kinase family.

It carries out the reaction dTMP + ATP = dTDP + ADP. Phosphorylation of dTMP to form dTDP in both de novo and salvage pathways of dTTP synthesis. In Bacillus anthracis, this protein is Thymidylate kinase.